The sequence spans 201 residues: Holliday junction branch migration complex subunit RuvA (201 aa).

The segment at 1-63 (MIASVRGEVL…EDSMTLYGFA (63 aa)) is domain I. The tract at residues 64-142 (DTEARDLFGL…LVPVQAGPPG (79 aa)) is domain II. The segment at 143-153 (STPAVAATPVR) is flexible linker. A domain III region spans residues 153–201 (REQVVEALTGLGFPLKQAEQALDTVLAEQPAADTSTALRAALSLLGKNR).

It belongs to the RuvA family. In terms of assembly, homotetramer. Forms an RuvA(8)-RuvB(12)-Holliday junction (HJ) complex. HJ DNA is sandwiched between 2 RuvA tetramers; dsDNA enters through RuvA and exits via RuvB. An RuvB hexamer assembles on each DNA strand where it exits the tetramer. Each RuvB hexamer is contacted by two RuvA subunits (via domain III) on 2 adjacent RuvB subunits; this complex drives branch migration. In the full resolvosome a probable DNA-RuvA(4)-RuvB(12)-RuvC(2) complex forms which resolves the HJ.

Its subcellular location is the cytoplasm. In terms of biological role, the RuvA-RuvB-RuvC complex processes Holliday junction (HJ) DNA during genetic recombination and DNA repair, while the RuvA-RuvB complex plays an important role in the rescue of blocked DNA replication forks via replication fork reversal (RFR). RuvA specifically binds to HJ cruciform DNA, conferring on it an open structure. The RuvB hexamer acts as an ATP-dependent pump, pulling dsDNA into and through the RuvAB complex. HJ branch migration allows RuvC to scan DNA until it finds its consensus sequence, where it cleaves and resolves the cruciform DNA. This Nocardia farcinica (strain IFM 10152) protein is Holliday junction branch migration complex subunit RuvA.